A 218-amino-acid polypeptide reads, in one-letter code: MRNENTPIAVEGYPFIAIAGVLTLILAAVSWHAPVVWAGTAFFLTVTLFVAFFFRNPERITPGNENAVVAPADGVVIYLGPAREEHLGVETTKISIFMSVFNVHINRAPVSGTVLDTFYVKGKFLDVRDDRATFENEQAGLVIETARGLRLAVVQVAGLIARRIVCYAGKGDRLTRGGRYGLIRFGSRLDIYLPTTTEVKVALGEKTVAGETVLGILP.

The active-site Schiff-base intermediate with substrate; via pyruvic acid is the Ser187. Ser187 carries the post-translational modification Pyruvic acid (Ser); by autocatalysis.

This sequence belongs to the phosphatidylserine decarboxylase family. PSD-A subfamily. In terms of assembly, heterodimer of a large membrane-associated beta subunit and a small pyruvoyl-containing alpha subunit. The cofactor is pyruvate. Post-translationally, is synthesized initially as an inactive proenzyme. Formation of the active enzyme involves a self-maturation process in which the active site pyruvoyl group is generated from an internal serine residue via an autocatalytic post-translational modification. Two non-identical subunits are generated from the proenzyme in this reaction, and the pyruvate is formed at the N-terminus of the alpha chain, which is derived from the carboxyl end of the proenzyme. The post-translation cleavage follows an unusual pathway, termed non-hydrolytic serinolysis, in which the side chain hydroxyl group of the serine supplies its oxygen atom to form the C-terminus of the beta chain, while the remainder of the serine residue undergoes an oxidative deamination to produce ammonia and the pyruvoyl prosthetic group on the alpha chain.

Its subcellular location is the cell membrane. The catalysed reaction is a 1,2-diacyl-sn-glycero-3-phospho-L-serine + H(+) = a 1,2-diacyl-sn-glycero-3-phosphoethanolamine + CO2. The protein operates within phospholipid metabolism; phosphatidylethanolamine biosynthesis; phosphatidylethanolamine from CDP-diacylglycerol: step 2/2. Its function is as follows. Catalyzes the formation of phosphatidylethanolamine (PtdEtn) from phosphatidylserine (PtdSer). This Geobacter sulfurreducens (strain ATCC 51573 / DSM 12127 / PCA) protein is Phosphatidylserine decarboxylase proenzyme.